Consider the following 404-residue polypeptide: Cysteine desulfurase IscS (404 aa).

Pyridoxal 5'-phosphate is bound by residues 75-76, Asn155, Gln183, and 203-205; these read AT and SGH. Residue Lys206 is modified to N6-(pyridoxal phosphate)lysine. Residue Thr243 participates in pyridoxal 5'-phosphate binding. Residue Cys328 is the Cysteine persulfide intermediate of the active site. [2Fe-2S] cluster is bound at residue Cys328.

The protein belongs to the class-V pyridoxal-phosphate-dependent aminotransferase family. NifS/IscS subfamily. In terms of assembly, homodimer. Forms a heterotetramer with IscU, interacts with other sulfur acceptors. The cofactor is pyridoxal 5'-phosphate.

Its subcellular location is the cytoplasm. It carries out the reaction (sulfur carrier)-H + L-cysteine = (sulfur carrier)-SH + L-alanine. The protein operates within cofactor biosynthesis; iron-sulfur cluster biosynthesis. Its function is as follows. Master enzyme that delivers sulfur to a number of partners involved in Fe-S cluster assembly, tRNA modification or cofactor biosynthesis. Catalyzes the removal of elemental sulfur atoms from cysteine to produce alanine. Functions as a sulfur delivery protein for Fe-S cluster synthesis onto IscU, an Fe-S scaffold assembly protein, as well as other S acceptor proteins. The polypeptide is Cysteine desulfurase IscS (Shewanella sp. (strain ANA-3)).